A 437-amino-acid polypeptide reads, in one-letter code: uncharacterized protein (437 aa).

Over residues 63–87 the composition is skewed to polar residues; sequence PSSANVSFQNSDDNLSTSRGRSASP. Disordered stretches follow at residues 63 to 97, 112 to 147, and 346 to 437; these read PSSA…SNFP, VKKD…KKET, and PKNA…YSIW. Polar residues predominate over residues 399–409; sequence EALSPSKSNPD. A compositionally biased stretch (low complexity) spans 425–437; sequence KKPSSSSSNYSIW.

This is an uncharacterized protein from Caenorhabditis elegans.